Here is a 322-residue protein sequence, read N- to C-terminus: Rhomboid-like protein 16, chloroplastic (322 aa).

The N-terminal 52 residues, 1–52, are a transit peptide targeting the chloroplast; it reads MHAIFCRRVAVGCSSPQLTKLVTKQASQSRHSLSHLLPFDLSSRFVPPYVVS. The next 6 helical transmembrane spans lie at 110-130, 166-186, 201-221, 238-258, 265-285, and 295-315; these read WING…AVFT, FSHV…YFGA, YFAG…LSVI, IGKL…MLLY, FGLM…LNII, and TLTS…WARI.

The protein belongs to the peptidase S54 family.

It is found in the plastid. The protein resides in the chloroplast membrane. Functionally, rhomboid-type serine protease that catalyzes intramembrane proteolysis. May cleave the plastid translocon component Tic40. This chain is Rhomboid-like protein 16, chloroplastic, found in Arabidopsis thaliana (Mouse-ear cress).